The primary structure comprises 399 residues: tRNA-specific 2-thiouridylase MnmA (399 aa).

ATP-binding positions include 21–28 (AMSGGVDS) and Leu47. Catalysis depends on Cys115, which acts as the Nucleophile. A disulfide bond links Cys115 and Cys211. Gly139 contacts ATP. Positions 161–163 (RDQ) are interaction with tRNA. The Cysteine persulfide intermediate role is filled by Cys211.

It belongs to the MnmA/TRMU family.

The protein resides in the cytoplasm. The enzyme catalyses S-sulfanyl-L-cysteinyl-[protein] + uridine(34) in tRNA + AH2 + ATP = 2-thiouridine(34) in tRNA + L-cysteinyl-[protein] + A + AMP + diphosphate + H(+). In terms of biological role, catalyzes the 2-thiolation of uridine at the wobble position (U34) of tRNA, leading to the formation of s(2)U34. The sequence is that of tRNA-specific 2-thiouridylase MnmA from Parvibaculum lavamentivorans (strain DS-1 / DSM 13023 / NCIMB 13966).